Reading from the N-terminus, the 201-residue chain is Peptide deformylase (201 aa).

Residues Cys114 and His156 each coordinate Fe cation. Glu157 is a catalytic residue. His160 serves as a coordination point for Fe cation.

The protein belongs to the polypeptide deformylase family. It depends on Fe(2+) as a cofactor.

It carries out the reaction N-terminal N-formyl-L-methionyl-[peptide] + H2O = N-terminal L-methionyl-[peptide] + formate. Functionally, removes the formyl group from the N-terminal Met of newly synthesized proteins. Requires at least a dipeptide for an efficient rate of reaction. N-terminal L-methionine is a prerequisite for activity but the enzyme has broad specificity at other positions. In Tropheryma whipplei (strain TW08/27) (Whipple's bacillus), this protein is Peptide deformylase.